Consider the following 586-residue polypeptide: Transcription elongation regulator 1-like protein (586 aa).

The tract at residues 1-30 (MQAGARFQRRRRQLQQQQPRRRQPLLWPMD) is disordered. Positions 7-23 (FQRRRRQLQQQQPRRRQ) are enriched in basic residues. Residues 148 to 181 (TPIGKSWIDKRIPNCKIFFNNSFALDSTWIHPEE) enclose the WW 1 domain. Disordered stretches follow at residues 281–344 (TSPV…PGSP) and 378–448 (DLNR…QILL). Positions 306–317 (KSRDGDKEDKEP) are enriched in basic and acidic residues. Residues 339–372 (PVPGSPWCVVWTGDDRVFFFNPTMHLSVWEKPMD) form the WW 2 domain. Composition is skewed to basic and acidic residues over residues 378-387 (DLNRIIEDPP), 411-421 (DQDVKTKRNRT), and 428-439 (KPEEAKREDKGT). FF domains follow at residues 450–503 (LEER…FVKT) and 515–570 (KLLL…FILI).

This chain is Transcription elongation regulator 1-like protein (TCERG1L), found in Homo sapiens (Human).